The chain runs to 237 residues: tRNA(His) guanylyltransferase (237 aa).

An N-acetylalanine modification is found at Ala2. The Mg(2+) site is built by Asp29 and Gly30. The GTP site is built by Lys32, Phe33, His34, Lys44, and Asp47. Asp77 lines the Mg(2+) pocket.

It belongs to the tRNA(His) guanylyltransferase family. In terms of assembly, homotetramer. Requires Mg(2+) as cofactor.

The enzyme catalyses a 5'-end ribonucleotide-tRNA(His) + GTP + ATP + H2O = a 5'-end phospho-guanosine-ribonucleotide-tRNA(His) + AMP + 2 diphosphate + H(+). The catalysed reaction is a 5'-end ribonucleotide-RNA + a ribonucleoside 5'-triphosphate + ATP + H2O = a 5'-end phospho-ribonucleoside-ribonucleotide-RNA + AMP + 2 diphosphate + H(+). Its function is as follows. Acts as a tRNA(His) guanylyltransferase that catalyzes 3'-5' addition of a single guanosine residue to the -1 position of tRNA(His), to form a non-Watson-Crick G(-1):A-73 base pair. After addition of G(-1), THG1 removes pyrophosphate from the tRNA 5'-end, generating 5'-monophosphorylated G(-1)-containing tRNA which is important for recognition of tRNA(His) by its cognate histidyl-tRNA synthetase. In addition to the single-G(-1) addition reaction, THG1 polymerizes multiple G residues to the 5'-end of tRNA(His) variants using the 3'-end of the tRNA(His) acceptor stem as a template. This Saccharomyces cerevisiae (strain ATCC 204508 / S288c) (Baker's yeast) protein is tRNA(His) guanylyltransferase.